The sequence spans 396 residues: Interactor of constitutive active ROPs 5 (396 aa).

Disordered stretches follow at residues 1–49 (MQTP…TQIP) and 99–122 (ALKREAQEEAEDAKHQLMDINASE). Coiled coils occupy residues 67 to 124 (KKRT…SEDS) and 158 to 366 (LSSA…TAAS). A compositionally biased stretch (basic and acidic residues) spans 99 to 115 (ALKREAQEEAEDAKHQL).

Belongs to the ICR family. As to quaternary structure, component of the active ARAC10-IRC5-KIN13A complex. Homooligomer. Interacts (via C-terminus) with ARAC4, ARAC10, ARAC11 and (via N-terminus) with KIN13A (via C-terminus), but no interactions with SEC3A. In terms of tissue distribution, expressed in xylem cells in the roots and in stamens, petals and pollen.

Its subcellular location is the cell membrane. The protein localises to the cytoplasm. It is found in the cytoskeleton. Functionally, ROP effector binding specifically activated ROPs and linking them to the microtubule cytoskeleton. Involved in ROP-regulated polar growth. Involved in local disassembly of cortical microtubules when associated with ARAC10 and KIN13A and conversely also mediates the elimination of ARAC10 from the plasma membrane by the cortical microtubules. Accumulates at the plus end of shrinking microtubules. Targets KIN13A to microtubules. The sequence is that of Interactor of constitutive active ROPs 5 (ICR5) from Arabidopsis thaliana (Mouse-ear cress).